The following is a 417-amino-acid chain: Serine hydroxymethyltransferase (417 aa).

K54 is subject to N6-acetyllysine. (6S)-5,6,7,8-tetrahydrofolate-binding positions include L121 and 125 to 127 (GHL). N6-(pyridoxal phosphate)lysine is present on K229. Residues K250, K285, and K354 each carry the N6-acetyllysine modification. Position 355–357 (355–357 (SPF)) interacts with (6S)-5,6,7,8-tetrahydrofolate. At K375 the chain carries N6-acetyllysine.

This sequence belongs to the SHMT family. Homodimer. Pyridoxal 5'-phosphate serves as cofactor.

The protein resides in the cytoplasm. The enzyme catalyses (6R)-5,10-methylene-5,6,7,8-tetrahydrofolate + glycine + H2O = (6S)-5,6,7,8-tetrahydrofolate + L-serine. Its pathway is one-carbon metabolism; tetrahydrofolate interconversion. The protein operates within amino-acid biosynthesis; glycine biosynthesis; glycine from L-serine: step 1/1. Its function is as follows. Catalyzes the reversible interconversion of serine and glycine with tetrahydrofolate (THF) serving as the one-carbon carrier. This reaction serves as the major source of one-carbon groups required for the biosynthesis of purines, thymidylate, methionine, and other important biomolecules. Also exhibits THF-independent aldolase activity toward beta-hydroxyamino acids, producing glycine and aldehydes, via a retro-aldol mechanism. This Shigella dysenteriae serotype 1 (strain Sd197) protein is Serine hydroxymethyltransferase.